The primary structure comprises 419 residues: S-adenosylmethionine synthase (419 aa).

Residue histidine 15 coordinates ATP. Residue aspartate 17 coordinates Mg(2+). Residue glutamate 43 participates in K(+) binding. L-methionine is bound by residues glutamate 56 and glutamine 100. The tract at residues 100-110 is flexible loop; it reads QSPDIAQGVNE. Residues 171-173, 248-249, aspartate 257, 263-264, alanine 280, and lysine 284 each bind ATP; these read DGK, KF, and RK. An L-methionine-binding site is contributed by aspartate 257. Lysine 288 contacts L-methionine.

It belongs to the AdoMet synthase family. In terms of assembly, homotetramer; dimer of dimers. The cofactor is Mg(2+). K(+) is required as a cofactor.

It is found in the cytoplasm. It catalyses the reaction L-methionine + ATP + H2O = S-adenosyl-L-methionine + phosphate + diphosphate. Its pathway is amino-acid biosynthesis; S-adenosyl-L-methionine biosynthesis; S-adenosyl-L-methionine from L-methionine: step 1/1. Catalyzes the formation of S-adenosylmethionine (AdoMet) from methionine and ATP. The overall synthetic reaction is composed of two sequential steps, AdoMet formation and the subsequent tripolyphosphate hydrolysis which occurs prior to release of AdoMet from the enzyme. This is S-adenosylmethionine synthase from Prochlorococcus marinus (strain MIT 9303).